The sequence spans 187 residues: Adenylate kinase (187 aa).

An ATP-binding site is contributed by 10–15; sequence GSGKGT. Residues 30–59 form an NMP region; that stretch reads STGDLLRSEVVAGTPLGLQAKQVMAQGDLV. AMP is bound by residues Thr-31, Arg-36, 57–59, 85–88, and Gln-92; these read DLV and GYPR. The tract at residues 126–136 is LID; sequence GRAQAEGREDD. Arg-127 contacts ATP. Positions 133 and 144 each coordinate AMP. Gly-172 lines the ATP pocket.

The protein belongs to the adenylate kinase family. In terms of assembly, monomer.

It localises to the cytoplasm. The enzyme catalyses AMP + ATP = 2 ADP. It functions in the pathway purine metabolism; AMP biosynthesis via salvage pathway; AMP from ADP: step 1/1. Catalyzes the reversible transfer of the terminal phosphate group between ATP and AMP. Plays an important role in cellular energy homeostasis and in adenine nucleotide metabolism. The polypeptide is Adenylate kinase (Xylella fastidiosa (strain 9a5c)).